Here is an 814-residue protein sequence, read N- to C-terminus: Microbial collagenase (814 aa).

Positions Met-1–Ala-21 are cleaved as a signal peptide. Residues Leu-22–Ser-75 constitute a propeptide that is removed on maturation. A Zn(2+)-binding site is contributed by His-477. Glu-478 is an active-site residue. Position 481 (His-481) interacts with Zn(2+). In terms of domain architecture, PKD spans Ala-609–Asp-697.

It belongs to the peptidase M9A family. The cofactor is Zn(2+). In terms of processing, proteolytic cleavage might yield three different active forms.

The protein localises to the secreted. It carries out the reaction Digestion of native collagen in the triple helical region at Xaa-|-Gly bonds. With synthetic peptides, a preference is shown for Gly at P3 and P1', Pro and Ala at P2 and P2', and hydroxyproline, Ala or Arg at P3'.. This chain is Microbial collagenase, found in Vibrio alginolyticus.